A 78-amino-acid chain; its full sequence is CDC42 small effector protein 1 (78 aa).

Residues cysteine 10 and cysteine 11 are each lipidated (S-palmitoyl cysteine). Positions 30 to 43 (IGEPMNFVHLTHIG) constitute a CRIB domain.

Belongs to the CDC42SE/SPEC family.

It localises to the cytoplasm. The protein localises to the cytoskeleton. It is found in the cell membrane. Its function is as follows. Probably involved in the organization of the actin cytoskeleton by acting downstream of CDC42, inducing actin filament assembly. This is CDC42 small effector protein 1 (CDC42SE1) from Gallus gallus (Chicken).